We begin with the raw amino-acid sequence, 149 residues long: Transcriptional regulator MraZ (149 aa).

2 consecutive SpoVT-AbrB domains span residues 7–54 and 83–126; these read KYVN…GISH and AVQL…QPQN.

The protein belongs to the MraZ family. Forms oligomers.

It localises to the cytoplasm. It is found in the nucleoid. The chain is Transcriptional regulator MraZ from Rickettsia felis (strain ATCC VR-1525 / URRWXCal2) (Rickettsia azadi).